A 552-amino-acid chain; its full sequence is Solute carrier family 22 member 6-B (552 aa).

The Cytoplasmic segment spans residues 1-16; sequence MAFQEILESLGGMGRY. A helical transmembrane segment spans residues 17 to 37; the sequence is QVIHVVLLSLPVFMLASHNLM. At 38–137 the chain is on the extracellular side; it reads QNFTAATPSH…LVCNHRRMRQ (100 aa). A helical transmembrane segment spans residues 138–158; sequence VAQSIYMAGVLVGSILFGGLS. The Cytoplasmic segment spans residues 159–164; the sequence is DKFGRR. A helical membrane pass occupies residues 165 to 184; that stretch reads PLNIWSNLQMFVTGICAAFS. Residue P185 is a topological domain, extracellular. The chain crosses the membrane as a helical span at residues 186-206; the sequence is NYIWYCIFRFLTGVAFSGIVL. Residues 207–225 are Cytoplasmic-facing; sequence NSYSLTVEWIPTGNRAFTS. A helical transmembrane segment spans residues 226–246; that stretch reads TATGYCYTMGQLVLVGLAFII. The Extracellular segment spans residues 247-250; it reads RDWQ. Residues 251-271 form a helical membrane-spanning segment; that stretch reads WLQLAASIPFFFYFLYSWWIP. Residues 272–336 are Cytoplasmic-facing; sequence ESGRWLVLSG…YSALDLVRTP (65 aa). The helical transmembrane segment at 337 to 356 threads the bilayer; that stretch reads VVRRISFCISCTWFSTSFAY. Residue Y357 is a topological domain, extracellular. A helical membrane pass occupies residues 358–378; that stretch reads GLALDLQSFGVSIYIIQIIFG. Topologically, residues 379–398 are cytoplasmic; sequence TVDIPAKFISYFITTYVGRR. Residues 399–419 form a helical membrane-spanning segment; sequence VSQAITLILAGIAILVNISVP. At 420-426 the chain is on the extracellular side; it reads QDFQTVR. A helical transmembrane segment spans residues 427 to 447; it reads TAMAVFGKGCLAASFNCLYLY. Topologically, residues 448 to 459 are cytoplasmic; that stretch reads TGELYPTVIRQT. A helical transmembrane segment spans residues 460–480; sequence GMGLGAMMARLGGIIAPLAQM. Residues 481 to 487 are Extracellular-facing; it reads TGDIYHS. The chain crosses the membrane as a helical span at residues 488–508; that stretch reads LPLIIFGCLPILSGIAGCFLP. At 509–552 the chain is on the cytoplasmic side; sequence ETLGVPLPETIEEVESPDKQQKDVNVSAKIPLKETELYNMKTDV.

It belongs to the major facilitator (TC 2.A.1) superfamily. Organic cation transporter (TC 2.A.1.19) family. Post-translationally, glycosylated. Glycosylation is necessary for proper targeting of the transporter to the plasma membrane.

It is found in the cell membrane. The protein resides in the basolateral cell membrane. The protein localises to the basal cell membrane. Its function is as follows. Involved in the renal elimination of endogenous and exogenous organic anions. Mediates the sodium-independent uptake of p-aminohippurate (PAH), cidofovir, adefovir, 9-(2-phosphonylmethoxyethyl) guanine (PMEG), 9-(2-phosphonylmethoxyethyl) diaminopurine (PMEDAP) and edaravone sulfate. PAH uptake is inhibited by furosemide, steviol, phorbol 12-myristate 13-acetate (PMA), calcium ionophore A23187, benzylpenicillin, furosemide, indomethacin, bumetamide, losartan, probenecid, phenol red, urate, and alpha-ketoglutarate. In Xenopus laevis (African clawed frog), this protein is Solute carrier family 22 member 6-B (slc22a6-b).